The sequence spans 88 residues: UPF0297 protein LAR_0520 (88 aa).

Belongs to the UPF0297 family.

The protein is UPF0297 protein LAR_0520 of Limosilactobacillus reuteri subsp. reuteri (strain JCM 1112) (Lactobacillus reuteri).